The chain runs to 577 residues: Arginine--tRNA ligase (577 aa).

Positions 122 to 132 (PNVAKEMHVGH) match the 'HIGH' region motif.

It belongs to the class-I aminoacyl-tRNA synthetase family. In terms of assembly, monomer.

The protein resides in the cytoplasm. The enzyme catalyses tRNA(Arg) + L-arginine + ATP = L-arginyl-tRNA(Arg) + AMP + diphosphate. The polypeptide is Arginine--tRNA ligase (Salmonella dublin (strain CT_02021853)).